A 132-amino-acid polypeptide reads, in one-letter code: Small ribosomal subunit protein uS8c (132 aa).

It belongs to the universal ribosomal protein uS8 family. As to quaternary structure, part of the 30S ribosomal subunit.

The protein localises to the plastid. It is found in the chloroplast. Functionally, one of the primary rRNA binding proteins, it binds directly to 16S rRNA central domain where it helps coordinate assembly of the platform of the 30S subunit. This Marchantia polymorpha (Common liverwort) protein is Small ribosomal subunit protein uS8c (rps8).